The chain runs to 259 residues: AA9 family lytic polysaccharide monooxygenase E (259 aa).

The signal sequence occupies residues 1 to 20; that stretch reads MKATVLAGLAAVIAAQGVAG. Cu(2+)-binding residues include histidine 21 and histidine 99. A disulfide bridge connects residues cysteine 69 and cysteine 193. O2-binding residues include histidine 179 and glutamine 188. A Cu(2+)-binding site is contributed by tyrosine 190.

It belongs to the polysaccharide monooxygenase AA9 family. Cu(2+) serves as cofactor.

Its subcellular location is the secreted. The enzyme catalyses [(1-&gt;4)-beta-D-glucosyl]n+m + reduced acceptor + O2 = 4-dehydro-beta-D-glucosyl-[(1-&gt;4)-beta-D-glucosyl]n-1 + [(1-&gt;4)-beta-D-glucosyl]m + acceptor + H2O.. In terms of biological role, lytic polysaccharide monooxygenase (LPMO) that depolymerizes crystalline and amorphous polysaccharides via the oxidation of scissile alpha- or beta-(1-4)-glycosidic bonds, yielding C1 or C4 oxidation products. Catalysis by LPMOs requires the reduction of the active-site copper from Cu(II) to Cu(I) by a reducing agent and H(2)O(2) or O(2) as a cosubstrate. In Malbranchea cinnamomea (Thermophilic fungus), this protein is AA9 family lytic polysaccharide monooxygenase E.